The primary structure comprises 164 residues: Protein-export protein SecB (164 aa).

The protein belongs to the SecB family. As to quaternary structure, homotetramer, a dimer of dimers. One homotetramer interacts with 1 SecA dimer.

It localises to the cytoplasm. Functionally, one of the proteins required for the normal export of preproteins out of the cell cytoplasm. It is a molecular chaperone that binds to a subset of precursor proteins, maintaining them in a translocation-competent state. It also specifically binds to its receptor SecA. This is Protein-export protein SecB from Zymomonas mobilis subsp. mobilis (strain ATCC 31821 / ZM4 / CP4).